We begin with the raw amino-acid sequence, 625 residues long: Interleukin-1 receptor-associated kinase-like 2 (625 aa).

A Death domain is found at L13–K94. The tract at residues K111–S181 is disordered. A Phosphoserine modification is found at S144. Polar residues predominate over residues L169–S181. The Protein kinase domain occupies F210–L489. ATP-binding positions include I216 to V224, K237, and K337 to N340. Residues L510–S540 are disordered. A compositionally biased stretch (polar residues) spans S516–P526.

It belongs to the protein kinase superfamily. TKL Ser/Thr protein kinase family. Pelle subfamily. In terms of assembly, interacts with MYD88. IL-1 stimulation leads to the formation of a signaling complex which dissociates from the IL-1 receptor following the binding of PELI1. Expressed in spleen, thymus, prostate, lung, liver, skeletal muscle, kidney, pancreas and peripheral blood leukocytes.

Functionally, binds to the IL-1 type I receptor following IL-1 engagement, triggering intracellular signaling cascades leading to transcriptional up-regulation and mRNA stabilization. The polypeptide is Interleukin-1 receptor-associated kinase-like 2 (IRAK2) (Homo sapiens (Human)).